Reading from the N-terminus, the 1675-residue chain is Clathrin heavy chain 1 (1675 aa).

At alanine 2 the chain carries N-acetylalanine. The segment at 2–479 is globular terminal domain; the sequence is AQILPIRFQE…VDPTLALSVY (478 aa). WD40-like repeat regions lie at residues 24 to 67, 68 to 107, 108 to 149, 150 to 195, 196 to 257, 258 to 301, and 302 to 330; these read NIGF…RPIS, ADSAIMNPASKVIALKAGKTLQIFNIEMKSKMKAHTMTDD, VTFW…SSLA, GCQI…QPIE, GHAA…PEAQ, NDFP…ISGE, and TIFVTAPHEATAGIIGVNRKGQVLSVCVE. Serine 67 carries the phosphoserine modification. Threonine 105 is subject to Phosphothreonine. The residue at position 184 (tyrosine 184) is a Phosphotyrosine. Threonine 394 carries the post-translational modification Phosphothreonine. Residues 449–465 form a binding site for the uncoating ATPase, involved in lattice disassembly region; it reads EKWLKEDKLECSEELGD. Residues 480–523 form a flexible linker region; that stretch reads LRANVPNKVIQCFAETGQVQKIVLYAKKVGYTPDWIFLLRNVMR. Positions 524 to 634 are distal segment; that stretch reads ISPDQGQQFA…RALEHFTDLY (111 aa). Residues 524–1675 are heavy chain arm; sequence ISPDQGQQFA…QPQPGFGYSM (1152 aa). CHCR repeat units lie at residues 537-683, 686-828, 833-972, 979-1124, 1128-1269, 1274-1420, and 1423-1566; these read VQDE…QICV, ASKY…SEDV, ILVV…PLID, LSET…VKEA, YIKA…FRLA, LHIV…LLLN, and LMVL…RECF. Tyrosine 634 carries the phosphotyrosine modification. Residues 639–1675 form a proximal segment region; it reads AVVHTHLLNP…QPQPGFGYSM (1037 aa). Residue lysine 737 is modified to N6-succinyllysine. An N6-acetyllysine modification is found at lysine 856. A Phosphotyrosine modification is found at tyrosine 899. Serine 1167 carries the phosphoserine modification. Phosphotyrosine is present on tyrosine 1206. Residues 1213–1522 form an involved in binding clathrin light chain region; the sequence is AAKLLYNNVS…YLFKGNNRWK (310 aa). Serine 1229 is subject to Phosphoserine. Lysine 1441 is subject to N6-acetyllysine; alternate. The residue at position 1441 (lysine 1441) is an N6-succinyllysine; alternate. Phosphotyrosine occurs at positions 1477 and 1487. The residue at position 1494 (serine 1494) is a Phosphoserine. Residue lysine 1501 is modified to N6-acetyllysine. Positions 1550-1675 are trimerization; that stretch reads AEELLQWFLQ…QPQPGFGYSM (126 aa).

It belongs to the clathrin heavy chain family. As to quaternary structure, clathrin triskelions, composed of 3 heavy chains and 3 light chains, are the basic subunits of the clathrin coat. In the presence of light chains, hub assembly is influenced by both the pH and the concentration of calcium. Interacts with HIP1. Interacts with DENND1A, DENND1B and DENND1C. Interacts with OCRL. Interacts with ERBB2. Interacts with FKBP6. Interacts with CKAP5 and TACC3 forming the TACC3/ch-TOG/clathrin complex located at spindle inter-microtubules bridges; the complex implicates clathrin triskelions; TACC3 and CLTC are proposed to form a composite microtubule interaction surface. Interacts with ATG16L1 (via N-terminus). Interacts with RFTN1; the interaction occurs in response to pathogens. Interacts with TMEM106B (via N-terminus). Interacts with DNAJC6; this interaction produces a local change in heavy-chain contacts, creating a detectable global distortion of the clathrin coat and leads to the recruitment of HSPA8.

It is found in the cytoplasmic vesicle membrane. The protein resides in the membrane. It localises to the coated pit. Its subcellular location is the melanosome. The protein localises to the cytoplasm. It is found in the cytoskeleton. The protein resides in the spindle. Clathrin is the major protein of the polyhedral coat of coated pits and vesicles. Two different adapter protein complexes link the clathrin lattice either to the plasma membrane or to the trans-Golgi network. Acts as a component of the TACC3/ch-TOG/clathrin complex proposed to contribute to stabilization of kinetochore fibers of the mitotic spindle by acting as inter-microtubule bridge. The TACC3/ch-TOG/clathrin complex is required for the maintenance of kinetochore fiber tension. Plays a role in early autophagosome formation. Interaction with DNAJC6 mediates the recruitment of HSPA8 to the clathrin lattice and creates local destabilization of the lattice promoting uncoating. The protein is Clathrin heavy chain 1 of Bos taurus (Bovine).